We begin with the raw amino-acid sequence, 396 residues long: Alpha-galactosidase 2 (396 aa).

A signal peptide spans 1 to 25 (MVLLSFSLRFIAFTLTITLTQIADG). Cystine bridges form between Cys-52-Cys-84 and Cys-132-Cys-163. The N-linked (GlcNAc...) asparagine glycan is linked to Asn-55. Substrate is bound by residues 82–83 (DD) and Lys-159. Asp-161 serves as the catalytic Nucleophile. Substrate is bound by residues 194-198 (EWGQE), Arg-212, and Asp-216. The Proton donor role is filled by Asp-216. Asn-343 and Asn-354 each carry an N-linked (GlcNAc...) asparagine glycan.

Belongs to the glycosyl hydrolase 27 family. Homodimer.

It localises to the secreted. It is found in the cell wall. The protein localises to the extracellular space. The protein resides in the apoplast. The catalysed reaction is Hydrolysis of terminal, non-reducing alpha-D-galactose residues in alpha-D-galactosides, including galactose oligosaccharides, galactomannans and galactolipids.. Its function is as follows. May regulate leaf (and possibly other organ) development by functioning in cell wall loosening and cell wall expansion. This chain is Alpha-galactosidase 2, found in Arabidopsis thaliana (Mouse-ear cress).